A 366-amino-acid chain; its full sequence is Protein U1 (366 aa).

The protein belongs to the herpesviridae US22 family.

This chain is Protein U1 (U1), found in Human herpesvirus 6A (strain Uganda-1102) (HHV-6 variant A).